Here is a 199-residue protein sequence, read N- to C-terminus: Recombination protein RecR (199 aa).

The C4-type zinc finger occupies 58–73 (CKKCFNFTSEDECEIC). Positions 81-175 (KLICVVAETK…KVTRIAYGLP (95 aa)) constitute a Toprim domain.

Belongs to the RecR family.

Its function is as follows. May play a role in DNA repair. It seems to be involved in an RecBC-independent recombinational process of DNA repair. It may act with RecF and RecO. The chain is Recombination protein RecR from Prochlorococcus marinus (strain MIT 9312).